The primary structure comprises 308 residues: Maspardin (308 aa).

Residues 87-159 (FCDGFRKLLD…NSFWLMPAFM (73 aa)) enclose the AB hydrolase-1 domain.

It belongs to the AB hydrolase superfamily. As to quaternary structure, interacts with CD4. Interacts with ALDH16A1.

It localises to the cytoplasm. Its function is as follows. May play a role as a negative regulatory factor in CD4-dependent T-cell activation. The polypeptide is Maspardin (SPG21) (Macaca fascicularis (Crab-eating macaque)).